Here is a 149-residue protein sequence, read N- to C-terminus: Transcriptional repressor NrdR (149 aa).

A zinc finger spans residues 3-34 (CPFCSTEETKVIDSRLVSDGYQVRRRRECTKC). The ATP-cone domain occupies 49–139 (PKIIKNNGMR…VYLSFENINE (91 aa)).

Belongs to the NrdR family. Requires Zn(2+) as cofactor.

In terms of biological role, negatively regulates transcription of bacterial ribonucleotide reductase nrd genes and operons by binding to NrdR-boxes. The sequence is that of Transcriptional repressor NrdR from Mannheimia succiniciproducens (strain KCTC 0769BP / MBEL55E).